Reading from the N-terminus, the 131-residue chain is Translation initiation factor 5A (131 aa).

Lys36 carries the hypusine modification.

Belongs to the eIF-5A family.

Its subcellular location is the cytoplasm. In terms of biological role, functions by promoting the formation of the first peptide bond. In Sulfurisphaera tokodaii (strain DSM 16993 / JCM 10545 / NBRC 100140 / 7) (Sulfolobus tokodaii), this protein is Translation initiation factor 5A.